Here is a 206-residue protein sequence, read N- to C-terminus: Cytochrome c oxidase assembly protein CtaG (206 aa).

Residues 1–17 (MPEVQPSALPKPAPRLG) are Cytoplasmic-facing. Residues 18–40 (RDAAVASICGFVVALMVGASFAA) traverse the membrane as a helical; Signal-anchor for type II membrane protein segment. Residues 41 to 206 (VPFYDWFCRT…GEPDQRKGNL (166 aa)) are Periplasmic-facing.

It belongs to the COX11/CtaG family.

Its subcellular location is the cell inner membrane. Functionally, exerts its effect at some terminal stage of cytochrome c oxidase synthesis, probably by being involved in the insertion of the copper B into subunit I. The chain is Cytochrome c oxidase assembly protein CtaG from Rhodopseudomonas palustris (strain BisB5).